The sequence spans 299 residues: Hydrogenase maturation factor HypB (299 aa).

Ni(2+)-binding residues include Cys2, Cys5, and Cys7. Residues 18–57 are disordered; the sequence is EVGDDGHGHHHHDGHHDHDHDHDHHRGDHEHDDHHHAEDG. Residues 31 to 57 show a composition bias toward basic and acidic residues; the sequence is GHHDHDHDHDHHRGDHEHDDHHHAEDG. The segment at 107–268 is G-domain; that stretch reads ALNFVSSPGS…LRVNPRLQTL (162 aa). Ni(2+) contacts are provided by Cys167, His168, and Cys199. Positions 167, 168, and 199 each coordinate Zn(2+).

The protein belongs to the SIMIBI class G3E GTPase family. HypB/HupM subfamily.

Functionally, involved in the maturation of [NiFe] hydrogenases. Required for nickel insertion into the metal center of the hydrogenase. Exhibits a low intrinsic GTPase activity, which is essential for nickel insertion. Is able to bind 4 nickel ions per subunit. Can also bind zinc. The protein is Hydrogenase maturation factor HypB of Rhizobium leguminosarum bv. viciae.